The sequence spans 933 residues: MTELKAKGPRAPHVAGGPPSPEVGSPLLCRPAAGPFPGSQTSDTLPEVSAIPISLDGLLFPRPCQGQDPSNEKTQDQQSLSDVEGAYSRAEATRGAGGSSSSPPEKDSGLLDSVLDTLLAPSGPGQSQPSPPACEVTSSWCLFGPELPEDPPAAPATQGVLSPLMSRSGCKAGDSSGTAAAHKVLPRGLSPSRQLLLPASGSPHWSGAPVKPSPQPAAVEVEEEDGSESEESAGPLLKGKPRALGGAAAGGGAAAVPPGAAAGGVALVPKEDSRFSAPRVALVEQDAPMAPXRSPLATTMMDFIHVPILPLNHALLAARTRQLLEDESYDGGAGAXSAFAPPRSSPSASSTPVAVGDFPDCAYPPDAEPKDDAYPLYSDFQPPALKIKEEEEGAEASARSPRSYLVAGANPAAFPDFPLGPPPPLPPRAPPSRPGEAAVTAAPASASVSSASSSGSTLECILYKAEGAPPQQGPFAPPPCKAPGASGCLLPRDGLPSTSASAAAAGAAPALYPALGLNGLPQLGYQAAVLKEGLPQVYPPYLNYLRPDSEASQSPQYSFESLPQKICLICGDEASGCHYGVLTCGSCKVFFKRAMEGQHNYLCAGRNDCIVDKIRRKNCPACRLRKCCQAGMVLGGRKFKKFNKVRVVRALDAVALPQPVGIPNESQALSQRFTFSPGQDIQLIPPLINLLMSIEPDVIYAGHDNTKPDTSSSLLTSLNQLGERQLLSVVKWSKSLPGFRNLHIDDQITLIQYSWMSLMVFGLGWRSYKHVSGQMLYFAPDLILNEQRMKESSFYSLCLTMWQIPQEFVKLQVSQEEFLCMKVLLLLNTIPLEGLRSQTQFEEMRSSYIRELIKAIGLRQKGVVSSSQRFYQLTKLLDNLHDLVKQLHLYCLNTFIQSRALSVEFPEMMSEVIAAQLPKILAGMVKPLLFHKK.

Residues 1–164 are AF3; mediates transcriptional activation; the sequence is MTELKAKGPR…PATQGVLSPL (164 aa). The interval 1–256 is disordered; it reads MTELKAKGPR…AAAGGGAAAV (256 aa). Residues 1 to 566 form a modulating, Pro-Rich region; the sequence is MTELKAKGPR…YSFESLPQKI (566 aa). At serine 20 the chain carries Phosphoserine. The short motif at 55–59 is the LXXL motif 1 element; sequence LDGLL. A Phosphoserine modification is found at serine 81. Residues 115–119 carry the LXXL motif 2 motif; sequence LDTLL. A phosphoserine mark is found at serine 130 and serine 162. Residues 165–305 are mediates transcriptional transrepression; it reads MSRSGCKAGD…LATTMMDFIH (141 aa). A Nuclear localization signal motif is present at residues 183–187; the sequence is KVLPR. Serine 190 and serine 213 each carry phosphoserine. Over residues 220 to 231 the composition is skewed to acidic residues; it reads EVEEEDGSESEE. A compositionally biased stretch (low complexity) spans 232–246; it reads SAGPLLKGKPRALGG. Residue serine 294 is modified to Phosphoserine; by MAPK1. The span at 335–356 shows a compositional bias: low complexity; it reads AXSAFAPPRSSPSASSTPVAVG. Residues 335 to 378 form a disordered region; the sequence is AXSAFAPPRSSPSASSTPVAVGDFPDCAYPPDAEPKDDAYPLYS. Serine 345 is modified (phosphoserine; by MAPK). A Glycyl lysine isopeptide (Lys-Gly) (interchain with G-Cter in SUMO); alternate cross-link involves residue lysine 388. Residue lysine 388 forms a Glycyl lysine isopeptide (Lys-Gly) (interchain with G-Cter in ubiquitin); alternate linkage. Phosphoserine; by CDK2 is present on serine 400. Residues 415 to 452 are disordered; the sequence is PDFPLGPPPPLPPRAPPSRPGEAAVTAAPASASVSSAS. Over residues 418–433 the composition is skewed to pro residues; sequence PLGPPPPLPPRAPPSR. Positions 434–452 are enriched in low complexity; it reads PGEAAVTAAPASASVSSAS. Positions 456-546 are AF1; mediates transcriptional activation; the sequence is STLECILYKA…VYPPYLNYLR (91 aa). Lysine 531 participates in a covalent cross-link: Glycyl lysine isopeptide (Lys-Gly) (interchain with G-Cter in SUMO). 2 NR C4-type zinc fingers span residues 567 to 587 and 603 to 627; these read CLICGDEASGCHYGVLTCGSC and CAGRNDCIVDKIRRKNCPACRLRKC. A DNA-binding region (nuclear receptor) is located at residues 567–639; sequence CLICGDEASG…AGMVLGGRKF (73 aa). The residue at position 676 (serine 676) is a Phosphoserine. Residues 679–913 enclose the NR LBD domain; sequence QDIQLIPPLI…EFPEMMSEVI (235 aa). Residues 687–933 are AF2; mediates transcriptional activation; sequence LINLLMSIEP…MVKPLLFHKK (247 aa). Arginine 766 contacts progesterone.

The protein belongs to the nuclear hormone receptor family. Interacts with SMARD1 and UNC45A. Interacts with CUEDC2; the interaction promotes ubiquitination, decreases sumoylation, and represses transcriptional activity. Interacts with PIAS3; the interaction promotes sumoylation of PR in a hormone-dependent manner, inhibits DNA-binding, and alters nuclear export. Interacts with SP1; the interaction requires ligand-induced phosphorylation on Ser-345 by ERK1/2-MAPK. Interacts with PRMT2. Interacts with NCOA2 and NCOA1. Interacts with KLF9. Interacts with GTF2B. Post-translationally, phosphorylated on multiple serine sites. Several of these sites are hormone-dependent. Phosphorylation on Ser-294 is highly hormone-dependent and modulates ubiquitination and sumoylation on Lys-388. Phosphorylation on Ser-102 and Ser-345 requires induction by hormone. Basal phosphorylation on Ser-81, Ser-162, Ser-190 and Ser-400 is increased in response to progesterone and can be phosphorylated in vitro by the CDK2-A1 complex. Increased levels of phosphorylation on Ser-400 also in the presence of EGF, heregulin, IGF, PMA and FBS. Phosphorylation at this site by CDK2 is ligand-independent, and increases nuclear translocation and transcriptional activity. Phosphorylation at Ser-162 and Ser-294, but not at Ser-190, is impaired during the G(2)/M phase of the cell cycle. Phosphorylation on Ser-345 by ERK1/2 MAPK is required for interaction with SP1. Sumoylation is hormone-dependent and represses transcriptional activity. Sumoylation on all three sites is enhanced by PIAS3. Desumoylated by SENP1. Sumoylation on Lys-388, the main site of sumoylation, is repressed by ubiquitination on the same site, and modulated by phosphorylation at Ser-294. In terms of processing, ubiquitination is hormone-dependent and represses sumoylation on the same site. Promoted by MAPK-mediated phosphorylation on Ser-294. Ubiquitinated by UBR5, leading to its degradation: UBR5 specifically recognizes and binds ligand-bound PGR when it is not associated with coactivators (NCOAs). In presence of NCOAs, the UBR5-degron is not accessible, preventing its ubiquitination and degradation. Post-translationally, palmitoylated by ZDHHC7 and ZDHHC21. Palmitoylation is required for plasma membrane targeting and for rapid intracellular signaling via ERK and AKT kinases and cAMP generation.

It is found in the nucleus. It localises to the cytoplasm. In terms of biological role, the steroid hormones and their receptors are involved in the regulation of eukaryotic gene expression and affect cellular proliferation and differentiation in target tissues. Transcriptional activator of several progesteron-dependent promoters in a variety of cell types. Involved in activation of SRC-dependent MAPK signaling on hormone stimulation. This Pan troglodytes (Chimpanzee) protein is Progesterone receptor (PGR).